Reading from the N-terminus, the 132-residue chain is Ribosome-binding factor A (132 aa).

Belongs to the RbfA family. Monomer. Binds 30S ribosomal subunits, but not 50S ribosomal subunits or 70S ribosomes.

The protein localises to the cytoplasm. In terms of biological role, one of several proteins that assist in the late maturation steps of the functional core of the 30S ribosomal subunit. Associates with free 30S ribosomal subunits (but not with 30S subunits that are part of 70S ribosomes or polysomes). Required for efficient processing of 16S rRNA. May interact with the 5'-terminal helix region of 16S rRNA. The polypeptide is Ribosome-binding factor A (Prochlorococcus marinus subsp. pastoris (strain CCMP1986 / NIES-2087 / MED4)).